A 185-amino-acid chain; its full sequence is Ribose 1,5-bisphosphate phosphokinase PhnN (185 aa).

10 to 17 provides a ligand contact to ATP; it reads GPSGSGKD.

It belongs to the ribose 1,5-bisphosphokinase family.

It catalyses the reaction alpha-D-ribose 1,5-bisphosphate + ATP = 5-phospho-alpha-D-ribose 1-diphosphate + ADP. It participates in metabolic intermediate biosynthesis; 5-phospho-alpha-D-ribose 1-diphosphate biosynthesis; 5-phospho-alpha-D-ribose 1-diphosphate from D-ribose 5-phosphate (route II): step 3/3. In terms of biological role, catalyzes the phosphorylation of ribose 1,5-bisphosphate to 5-phospho-D-ribosyl alpha-1-diphosphate (PRPP). The protein is Ribose 1,5-bisphosphate phosphokinase PhnN of Shigella dysenteriae serotype 1 (strain Sd197).